A 286-amino-acid chain; its full sequence is Pyridoxal kinase PdxY (286 aa).

Substrate is bound by residues S9 and 44-45 (TQ). ATP-binding positions include D111, A143, E148, K181, and 208–211 (RPLV). Residue D222 participates in substrate binding.

It belongs to the pyridoxine kinase family. PdxY subfamily. As to quaternary structure, homodimer. Mg(2+) is required as a cofactor.

It carries out the reaction pyridoxal + ATP = pyridoxal 5'-phosphate + ADP + H(+). The protein operates within cofactor metabolism; pyridoxal 5'-phosphate salvage; pyridoxal 5'-phosphate from pyridoxal: step 1/1. In terms of biological role, pyridoxal kinase involved in the salvage pathway of pyridoxal 5'-phosphate (PLP). Catalyzes the phosphorylation of pyridoxal to PLP. This chain is Pyridoxal kinase PdxY, found in Pectobacterium atrosepticum (strain SCRI 1043 / ATCC BAA-672) (Erwinia carotovora subsp. atroseptica).